The primary structure comprises 553 residues: Cytokine-like nuclear factor N-PAC (553 aa).

The PWWP domain occupies 8–66 (LGDLVWGKLGRYPPWPGKIVNPPKDLKKPRGKKCFFVKFFGTEDHAWIKVEQLKPYHAH). Composition is skewed to basic and acidic residues over residues 92 to 145 (RAKG…EGKK) and 162 to 182 (RAQE…KDLT). A disordered region spans residues 92–188 (RAKGKDQTSS…KDLTIPESST (97 aa)). Phosphoserine is present on S130. K135 is covalently cross-linked (Glycyl lysine isopeptide (Lys-Gly) (interchain with G-Cter in SUMO2)). A Phosphoserine modification is found at S167. Residues 168 to 180 (PRKRGRPPKDEKD) constitute a DNA-binding region (a.T hook). Glycyl lysine isopeptide (Lys-Gly) (interchain with G-Cter in SUMO2) cross-links involve residues K176, K179, K201, and K211. The interval 214–217 (DPHF) is interaction with histone H3. The tract at residues 216-225 (HFHHFLLSQT) is interaction with KDM1B. Glycyl lysine isopeptide (Lys-Gly) (interchain with G-Cter in SUMO2) cross-links involve residues K227, K237, K240, and K269. The dehydrogenase domain stretch occupies residues 261–553 (GSITPTDKKI…MSAVYRAYIH (293 aa)). 271–285 (GFLGLGLMGSGIVSN) contacts NAD(+). A Glycyl lysine isopeptide (Lys-Gly) (interchain with G-Cter in SUMO2) cross-link involves residue K302. NAD(+) is bound by residues T362 and K505. S540 carries the phosphoserine modification.

It belongs to the HIBADH-related family. NP60 subfamily. In terms of assembly, homotetramere. Interacts with MAPK14. Interacts with KDM1B at nucleosomes; this interaction stimulates H3K4me1 and H3K4me2 demethylation. Binds to mononucleosomes. Interacts with GATA4; the interaction is required for a synergistic activation of GATA4 target genes transcription.

The protein resides in the nucleus. It localises to the chromosome. Cytokine-like nuclear factor with chromatin gene reader activity involved in chromatin modification and regulation of gene expression. Acts as a nucleosome-destabilizing factor that is recruited to genes during transcriptional activation. Recognizes and binds histone H3 without a preference for specific epigenetic markers and also binds DNA. Interacts with KDM1B and promotes its histone demethylase activity by facilitating the capture of H3 tails, they form a multifunctional enzyme complex that modifies transcribed chromatin and facilitates Pol II transcription through nucleosomes. Stimulates the acetylation of 'Lys-56' of nucleosomal histone H3 (H3K56ac) by EP300. With GATA4, co-binds a defined set of heart development genes and coregulates their expression during cardiomyocyte differentiation. Regulates p38 MAP kinase activity by mediating stress activation of MAPK14/p38alpha and specifically regulating MAPK14 signaling. Indirectly promotes phosphorylation of MAPK14 and activation of ATF2. The phosphorylation of MAPK14 requires upstream activity of MAP2K4 and MAP2K6. This chain is Cytokine-like nuclear factor N-PAC, found in Homo sapiens (Human).